The chain runs to 257 residues: Snake venom serine protease KN9 (257 aa).

The signal sequence occupies residues 1 to 18; sequence MVLIRVLANLLILQLSYA. Positions 19–24 are excised as a propeptide; that stretch reads QKSSEL. The region spanning 25–248 is the Peptidase S1 domain; that stretch reads VVGGDECNIN…HLDWIKSIIA (224 aa). Cystine bridges form between C31–C162, C49–C65, C141–C209, C173–C188, and C199–C224. The active-site Charge relay system is the H64. The N-linked (GlcNAc...) asparagine glycan is linked to N102. Catalysis depends on D109, which acts as the Charge relay system. N120 and N121 each carry an N-linked (GlcNAc...) asparagine glycan. S203 (charge relay system) is an active-site residue.

Belongs to the peptidase S1 family. Snake venom subfamily. In terms of assembly, monomer. As to expression, expressed by the venom gland.

The protein localises to the secreted. Snake venom serine protease that may act in the hemostasis system of the prey. The sequence is that of Snake venom serine protease KN9 from Trimeresurus stejnegeri (Chinese green tree viper).